The chain runs to 64 residues: DNA gyrase inhibitor YacG (64 aa).

Residues C7, C10, C26, and C30 each contribute to the Zn(2+) site. The segment at 43–64 is disordered; it reads KRIPGPINPDLLPYPDEGEQWQ.

This sequence belongs to the DNA gyrase inhibitor YacG family. As to quaternary structure, interacts with GyrB. It depends on Zn(2+) as a cofactor.

Inhibits all the catalytic activities of DNA gyrase by preventing its interaction with DNA. Acts by binding directly to the C-terminal domain of GyrB, which probably disrupts DNA binding by the gyrase. The sequence is that of DNA gyrase inhibitor YacG from Aeromonas salmonicida (strain A449).